We begin with the raw amino-acid sequence, 92 residues long: Small ribosomal subunit protein uS19 (92 aa).

Residues 73–92 (EFSPSRTYYGHAADKKAKRR) are disordered.

It belongs to the universal ribosomal protein uS19 family.

Functionally, protein S19 forms a complex with S13 that binds strongly to the 16S ribosomal RNA. This chain is Small ribosomal subunit protein uS19, found in Maricaulis maris (strain MCS10) (Caulobacter maris).